The primary structure comprises 735 residues: Protostadienol synthase helA (735 aa).

The stretch at 132–173 is one PFTB 1 repeat; that stretch reads KQEMCRYLLNVVNEDGGWGLFIQSPSTVFGTVMNYCMLRILG. Asp463 functions as the Proton donor in the catalytic mechanism. PFTB repeat units follow at residues 490 to 531, 567 to 607, and 616 to 663; these read LQQA…YENV, LSRS…ACMG, and CQRA…AVIG.

The protein belongs to the terpene cyclase/mutase family.

It catalyses the reaction (S)-2,3-epoxysqualene = (17Z)-protosta-17(20),24-dien-3beta-ol. The protein operates within mycotoxin biosynthesis. Functionally, protostadienol synthase; part of the gene cluster that mediates the biosynthesis of helvolic acid, an antibacterial nortriterpenoid. Protostadienol synthase helA cyclizes (3S)-oxidosqualene to (17Z)-protosta-17(20),24-dien-3-beta-ol (protostadienol). The synthesis of protostadienol is followed by several steps of monooxygenation, dehydrogenation, and acyl transfer to yield the final helvolic acid. Following the cyclization to the tetracyclic protostadienol by helA, cytochrome P450 monooxygenases helB1-mediated and helB2-mediated oxidation at C-4 and C-16, acyltransferase helD2-dependent acetylation of 16-OH, oxidation of C-21 by cytochrome P450 monooxygenase helB4, and short chain dehydrogenase helC-dependent oxidative decarboxylation yield the fusidane skeleton. This intermediate is further modified in three additional steps mediated by the cytochrome P450 monooxygenase helB3, the acyltransferase helD1, and the 3-ketosteroid 1-dehydrogenase helE to give helvolic acid. Compared with the late stages in the biosynthesis of helvolic acid, enzymes involved in the early stage modifications act in a relatively strict order. The hydroxylation of C-16 by helB1 and subsequent acetylation by helD2 should occur before the helB3-mediated oxidation of C-21. C-4 demethylation in fusidane-type antibiotics proceeds in an unusual manner though it is also achieved by oxidative decarboxylation. The methyl group at C-4 beta position is oxidized by helB1 and subsequently removed by the short chain dehydrogenase helC. This is Protostadienol synthase helA from Aspergillus fumigatus (strain ATCC MYA-4609 / CBS 101355 / FGSC A1100 / Af293) (Neosartorya fumigata).